The sequence spans 220 residues: Iron-sulfur flavoprotein AF_1436 (220 aa).

[4Fe-4S] cluster contacts are provided by Cys-47, Cys-50, Cys-53, and Cys-59.

It belongs to the SsuE family. Isf subfamily. As to quaternary structure, homodimer. It depends on FMN as a cofactor. [4Fe-4S] cluster serves as cofactor.

In terms of biological role, redox-active protein probably involved in electron transport. This chain is Iron-sulfur flavoprotein AF_1436, found in Archaeoglobus fulgidus (strain ATCC 49558 / DSM 4304 / JCM 9628 / NBRC 100126 / VC-16).